Consider the following 360-residue polypeptide: tRNA N6-adenosine threonylcarbamoyltransferase (360 aa).

2 residues coordinate Fe cation: H115 and H119. Substrate contacts are provided by residues 137–141 (LVSGG), D170, G183, and N283. D311 serves as a coordination point for Fe cation.

It belongs to the KAE1 / TsaD family. Fe(2+) serves as cofactor.

The protein localises to the cytoplasm. It catalyses the reaction L-threonylcarbamoyladenylate + adenosine(37) in tRNA = N(6)-L-threonylcarbamoyladenosine(37) in tRNA + AMP + H(+). Functionally, required for the formation of a threonylcarbamoyl group on adenosine at position 37 (t(6)A37) in tRNAs that read codons beginning with adenine. Is involved in the transfer of the threonylcarbamoyl moiety of threonylcarbamoyl-AMP (TC-AMP) to the N6 group of A37, together with TsaE and TsaB. TsaD likely plays a direct catalytic role in this reaction. The chain is tRNA N6-adenosine threonylcarbamoyltransferase from Sinorhizobium medicae (strain WSM419) (Ensifer medicae).